A 183-amino-acid polypeptide reads, in one-letter code: Peptidyl-prolyl cis-trans isomerase 11 (183 aa).

The region spanning 20-182 (FLEVTAGGAP…LPIVVVQCGQ (163 aa)) is the PPIase cyclophilin-type domain.

This sequence belongs to the cyclophilin-type PPIase family. PPIase H subfamily.

It catalyses the reaction [protein]-peptidylproline (omega=180) = [protein]-peptidylproline (omega=0). In terms of biological role, PPIases accelerate the folding of proteins. It catalyzes the cis-trans isomerization of proline imidic peptide bonds in oligopeptides. The protein is Peptidyl-prolyl cis-trans isomerase 11 (cyn-11) of Caenorhabditis elegans.